The primary structure comprises 215 residues: Cytochrome b6 (215 aa).

A helical membrane pass occupies residues 32–52 (IFYCLGGITLTCFLVQVATGF). Position 35 (Cys35) interacts with heme c. His86 and His100 together coordinate heme b. Helical transmembrane passes span 90 to 110 (ASMM…TGGF), 116 to 136 (LTWI…VTGY), and 186 to 206 (LHTF…FLMI). Residues His187 and His202 each coordinate heme b.

The protein belongs to the cytochrome b family. PetB subfamily. In terms of assembly, the 4 large subunits of the cytochrome b6-f complex are cytochrome b6, subunit IV (17 kDa polypeptide, PetD), cytochrome f and the Rieske protein, while the 4 small subunits are PetG, PetL, PetM and PetN. The complex functions as a dimer. Requires heme b as cofactor. It depends on heme c as a cofactor.

The protein localises to the plastid. It is found in the chloroplast thylakoid membrane. In terms of biological role, component of the cytochrome b6-f complex, which mediates electron transfer between photosystem II (PSII) and photosystem I (PSI), cyclic electron flow around PSI, and state transitions. This is Cytochrome b6 from Psilotum nudum (Whisk fern).